The chain runs to 271 residues: ATP synthase subunit a (271 aa).

Helical transmembrane passes span Thr-40–Phe-60, Leu-100–Leu-120, Asp-146–Ile-166, Leu-220–Pro-240, and Ala-242–Val-262.

This sequence belongs to the ATPase A chain family. F-type ATPases have 2 components, CF(1) - the catalytic core - and CF(0) - the membrane proton channel. CF(1) has five subunits: alpha(3), beta(3), gamma(1), delta(1), epsilon(1). CF(0) has three main subunits: a(1), b(2) and c(9-12). The alpha and beta chains form an alternating ring which encloses part of the gamma chain. CF(1) is attached to CF(0) by a central stalk formed by the gamma and epsilon chains, while a peripheral stalk is formed by the delta and b chains.

It localises to the cell inner membrane. In terms of biological role, key component of the proton channel; it plays a direct role in the translocation of protons across the membrane. The protein is ATP synthase subunit a of Escherichia coli O1:K1 / APEC.